Consider the following 62-residue polypeptide: Cuticle protein 6.4 (62 aa).

Component of the cuticle of migratory locust which contains more than 100 different structural proteins. This chain is Cuticle protein 6.4, found in Locusta migratoria (Migratory locust).